The following is a 260-amino-acid chain: Ribosome maturation factor RimP (260 aa).

Composition is skewed to basic and acidic residues over residues 189-199 (RRGRDAEREQL) and 215-227 (AREM…PRKE). Residues 189 to 260 (RRGRDAEREQ…QTTSDPHQGE (72 aa)) form a disordered region. Residues 228–242 (KTAKKPLPKNTKAHR) show a composition bias toward basic residues.

The protein belongs to the RimP family.

Its subcellular location is the cytoplasm. Required for maturation of 30S ribosomal subunits. The sequence is that of Ribosome maturation factor RimP from Afipia carboxidovorans (strain ATCC 49405 / DSM 1227 / KCTC 32145 / OM5) (Oligotropha carboxidovorans).